A 696-amino-acid polypeptide reads, in one-letter code: MPSDILVVAALGRPFTLGMLYDARNDKLIPGFTLWEDEVIEESTVESSQPSSAFEIIASDSIDDKSSLMEIEASLKASFLGGLVEVGGSAKYLNNQKKFKNQSRVTLQYKATTNFKQLMTNLGTKHVEYSELFENIQATHVVIGILYGANAFFVFDSNKVDSTNVQEIQGQMEAVIKKIPSVEISGKASVQLTSEETDITNSFSCEFHGDFFLTSNPTTFEDAVKTYQQLPQMMGKDNAVPMTVWLVPMVNFYSEAPQLMADSSTPILRKVRNTLEAIVQVQMRCNDALDDPTVNLFTEVQKKLSDFQIICDDHMSKLQATIAKKLFAIRSGDEDESALVNLFEENLQSPFNTESLNMWMEFEEREINVLKSCMDILTKAKPKVIFNQGVLFKELYDSKVKHGLCYVFTNVTKNDDFLTVLNDFLDSPQSRPKKLRPSPKDYWYSYDDIPEMMREKAHLFRNLAKEMNNRCVHFFVTAINNPKQEGAGIHYYRESIQIIHEFTKPHMPGVETIKDRRELQWYDCELTLDTETAHQVLTLSEGNKRQCRGVRVTRRSLREFSHFQQVMCHQGAEWTPLLGVRVAGHVSAGVTYKGISRKTSTPDSSLGKNQKSWVFEYTKKSGYQQIHNGKNARVTVSSIGFKQLGVYLDWPAGTLSFYIGQQSLGDSSPHLPHQILRGCLSSLPDWGCTTESQWSN.

In terms of domain architecture, B30.2/SPRY spans 506 to 696 (HMPGVETIKD…GCTTESQWSN (191 aa)).

The protein belongs to the SNTX/VTX toxin family. As to quaternary structure, tetramer composed of 2 alpha and 2 beta subunits. Post-translationally, glycosylated. In terms of tissue distribution, expressed by the venom gland.

It is found in the secreted. Its function is as follows. This lethal (towards mice) toxin induces hemolytic, cytolytic and hypotensive activities. Inhibits calcium channels and may activate ATP-sensitive potassium channels in frog atrial heart muscle. In guinea-pig ventricular myocytes, it modulates calcium channel activity through the beta-adrenoceptor-cAMP-PKA pathway (ADRB). This Synanceia verrucosa (Reef stonefish) protein is Verrucotoxin subunit beta.